We begin with the raw amino-acid sequence, 21 residues long: Nitrilase (21 aa).

It belongs to the carbon-nitrogen hydrolase superfamily. Nitrilase family.

It catalyses the reaction a nitrile + 2 H2O = a carboxylate + NH4(+). Functionally, acts on many kinds of nitrile compounds such as aliphatic, aromatic, and heterocyclic mononitriles or dinitriles. Prefers S-(-)-2-(4'-isobutylphenyl)-propionitrile to R-(+)-2-(4'-isobutylphenyl)-propionitrile as the substrate. This chain is Nitrilase, found in Acinetobacter sp. (strain AK226).